We begin with the raw amino-acid sequence, 760 residues long: Striatin-4 (760 aa).

The segment at 1 to 65 is disordered; the sequence is MMEERAAAAV…PTAGPEPLSL (65 aa). Residues 7 to 35 show a composition bias toward low complexity; it reads AAAVASAASSCRPLGSGTAPNPTAAAPAS. The span at 43–54 shows a compositional bias: gly residues; the sequence is PVGKGGGGGGSP. Ser53 carries the phosphoserine modification. Residues 69–136 adopt a coiled-coil conformation; it reads LHFIQHEWAR…QERAKYHKLK (68 aa). The caveolin-binding stretch occupies residues 71–79; sequence FIQHEWARF. The calmodulin-binding stretch occupies residues 165–182; that stretch reads ENSPLVWKEGRQLLRQYL. 3 positions are modified to phosphoserine: Ser206, Ser223, and Ser276. 2 disordered regions span residues 210 to 233 and 272 to 346; these read NGAG…SGGE and EDED…PHEL. Composition is skewed to acidic residues over residues 272 to 283 and 302 to 317; these read EDEDSDEDDELD and EMED…DAIN. A compositionally biased stretch (basic and acidic residues) spans 332-346; sequence PDPRRCTSEGNPHEL. 7 WD repeats span residues 443 to 482, 496 to 535, 549 to 588, 595 to 635, 642 to 681, 684 to 723, and 730 to 759; these read SHYD…TAKK, AHRG…MDPY, GHGD…PSCL, GEHG…ALLT, SGPA…SVHS, AHLD…CVQE, and KHEE…AKVF.

It belongs to the WD repeat striatin family. In terms of assembly, part of the core of STRIPAK complexes composed of PP2A catalytic and scaffolding subunits, the striatins (PP2A regulatory subunits), the striatin-associated proteins MOB4, STRIP1 and STRIP2, PDCD10 and members of the STE20 kinases, such as STK24 and STK26. Interacts with CTTNBP2NL. Mainly expressed in brain but is also expressed at low levels in the kidney.

The protein resides in the cytoplasm. It localises to the membrane. Its subcellular location is the cell projection. It is found in the dendritic spine. Calmodulin-binding scaffolding protein which is the center of the striatin-interacting phosphatase and kinase (STRIPAK) complexes. STRIPAK complexes have critical roles in protein (de)phosphorylation and are regulators of multiple signaling pathways including Hippo, MAPK, nuclear receptor and cytoskeleton remodeling. Different types of STRIPAK complexes are involved in a variety of biological processes such as cell growth, differentiation, apoptosis, metabolism and immune regulation. Key regulator of the expanded Hippo signaling pathway by interacting and allowing the inhibition of MAP4K kinases by the STRIPAK complex. The chain is Striatin-4 (Strn4) from Mus musculus (Mouse).